Reading from the N-terminus, the 294-residue chain is MSEVKVSAKMVKELRDRTGLGMMECKKALEESNGDVETAIDNLRKSGQAKAAKKAGNIAADGAIIIAQGDSKAFLLEVNCQTDFVAKDENFAAFAETVANLALENNVTDVAAIAELPYGNGQTVEEARVSLVQKIGENIQIRRVEVLEGANIAAYRHGLRIGVVVSYEGGSAETGKNLAMHIAAFNPVAVADEDVAADLLAREKDIIEAKARESGKPDNIVEKMIEGGLRKYLEEVTLLRQPYVMDNEKKVGDVLKAEGVKVLGFKRLEVGEGIEKKQEDFAAEVAATQALANK.

The involved in Mg(2+) ion dislocation from EF-Tu stretch occupies residues 82 to 85; it reads TDFV.

This sequence belongs to the EF-Ts family.

It localises to the cytoplasm. Functionally, associates with the EF-Tu.GDP complex and induces the exchange of GDP to GTP. It remains bound to the aminoacyl-tRNA.EF-Tu.GTP complex up to the GTP hydrolysis stage on the ribosome. The sequence is that of Elongation factor Ts from Psychrobacter cryohalolentis (strain ATCC BAA-1226 / DSM 17306 / VKM B-2378 / K5).